Consider the following 429-residue polypeptide: UDP-glucuronate 4-epimerase 1 (429 aa).

A run of 2 helical transmembrane segments spans residues 36–56 (FLWALFLIALTASYLSFQSFV) and 87–107 (GISVLVTGATGFVGSHVSLAL). An NAD(+)-binding site is contributed by 89 to 120 (SVLVTGATGFVGSHVSLALRKRGDGVVGLDNF). Y239 acts as the Proton acceptor in catalysis.

Belongs to the NAD(P)-dependent epimerase/dehydratase family. As to quaternary structure, homodimer. In terms of tissue distribution, in root stele, leaves, siliques, flowers, pollen and stems.

The protein resides in the golgi apparatus. It is found in the golgi stack membrane. The catalysed reaction is UDP-alpha-D-glucuronate = UDP-alpha-D-galacturonate. Its activity is regulated as follows. Inhibited by UDP-Xylose. UDP-D-glucuronate 4-epimerase involved in the synthesis of the negatively charged monosaccharide that forms the backbone of pectic cell wall components. The sequence is that of UDP-glucuronate 4-epimerase 1 (GAE1) from Arabidopsis thaliana (Mouse-ear cress).